A 501-amino-acid chain; its full sequence is Dipeptide and tripeptide permease A (501 aa).

Over 1–21 (MSTANNKPAESVSLNAFKQPR) the chain is Cytoplasmic. A helical membrane pass occupies residues 22–44 (AFYLIFSIELWERFGYYGLQGIM). At 45 to 59 (AVYLVKQLGMSEADS) the chain is on the periplasmic side. A helical membrane pass occupies residues 60–80 (ITLFSSFSALVYGLVAIGGWL). The Cytoplasmic portion of the chain corresponds to 81 to 89 (GDKVLGTKR). A helical transmembrane segment spans residues 90–110 (VIMLGAIVLAIGYALVAWSGH). A topological domain (periplasmic) is located at residue D111. The chain crosses the membrane as a helical span at residues 112–132 (AAIVYMGMATIAVGNGLFKAN). Residues 133–153 (PSSLLSTCYDKNDPRLDGAFT) lie on the Cytoplasmic side of the membrane. Residues 154–174 (MYYMSINIGSFFSMLATPWLA) form a helical membrane-spanning segment. The Periplasmic portion of the chain corresponds to 175-178 (ARFG). The helical transmembrane segment at 179–199 (WSVAFALSVVGMVITIINFAF) threads the bilayer. Residues 200–218 (CQKWVKQYGSKPDFAPVHM) lie on the Cytoplasmic side of the membrane. Residues 219–239 (GKLLATIAGVVVLVAIATWLL) form a helical membrane-spanning segment. Residues 240–246 (HNQGIAR) are Periplasmic-facing. The helical transmembrane segment at 247-267 (MVLGVVALGIVVIFAKETIGL) threads the bilayer. The Cytoplasmic portion of the chain corresponds to 268–274 (KGAARRK). A helical transmembrane segment spans residues 275 to 295 (MIVAFLLMVEAIVFFVLYSQM). The Periplasmic portion of the chain corresponds to 296 to 320 (PTSLNFFAIRNVEHSILGIAFEPEQ). A helical membrane pass occupies residues 321–341 (YQALNPFWIMIGSPILAAIYN). At 342 to 352 (KMGDRLPMPHK) the chain is on the cytoplasmic side. The helical transmembrane segment at 353 to 373 (FAIGMVLCSGAFLVLPLGAKF) threads the bilayer. Topologically, residues 374–383 (ASDAGIVSVN) are periplasmic. The chain crosses the membrane as a helical span at residues 384–404 (WLILSYALQSIGELMISGLGL). The Cytoplasmic portion of the chain corresponds to 405 to 414 (AMVAQLVPQR). Residues 415-435 (LMGFIMGSWFLTTAGAAIIAG) traverse the membrane as a helical segment. At 436–459 (KIANLMAVPENVTDPLVSLEVYGH) the chain is on the periplasmic side. The helical transmembrane segment at 460 to 480 (VFLQIGIVTAVIAALMLLTAP) threads the bilayer. The Cytoplasmic portion of the chain corresponds to 481 to 501 (KLNRMTQDDSADLKARETAAA).

The protein belongs to the major facilitator superfamily. Proton-dependent oligopeptide transporter (POT/PTR) (TC 2.A.17) family. DtpA subfamily.

The protein resides in the cell inner membrane. Functionally, proton-dependent permease that transports di- and tripeptides. In Klebsiella pneumoniae (strain 342), this protein is Dipeptide and tripeptide permease A.